A 446-amino-acid polypeptide reads, in one-letter code: Homocitrate synthase, mitochondrial (446 aa).

Residues 1 to 14 show a composition bias toward low complexity; sequence MCATDNAPAANAAP. Residues 1–36 form a disordered region; the sequence is MCATDNAPAANAAPEKPSNVGVEVGHTGEQTNPYGA. The Pyruvate carboxyltransferase domain maps to 48–307; sequence FQLIESTLRE…HKLRDLENLV (260 aa). A 2-oxoglutarate-binding site is contributed by R56. E57 is a Mg(2+) binding site. Residues H116, R176, and T210 each coordinate 2-oxoglutarate. Mg(2+) is bound by residues H237 and H239. Residue H334 is the Proton acceptor of the active site. A disordered region spans residues 422 to 446; it reads TPTVAATEGPAVEDEPAAKKAKTEE. A compositionally biased stretch (basic and acidic residues) spans 437–446; the sequence is PAAKKAKTEE.

This sequence belongs to the alpha-IPM synthase/homocitrate synthase family. Homocitrate synthase LYS20/LYS21 subfamily. The cofactor is Mg(2+). Mn(2+) serves as cofactor.

It is found in the mitochondrion. It catalyses the reaction acetyl-CoA + 2-oxoglutarate + H2O = (2R)-homocitrate + CoA + H(+). It functions in the pathway amino-acid biosynthesis; L-lysine biosynthesis via AAA pathway; L-alpha-aminoadipate from 2-oxoglutarate: step 1/5. Functionally, catalyzes the aldol-type condensation of 2-oxoglutarate with acetyl-CoA to yield homocitrate. Carries out the first step of the alpha-aminoadipate (AAA) lysine biosynthesis pathway. This Yarrowia lipolytica (strain CLIB 122 / E 150) (Yeast) protein is Homocitrate synthase, mitochondrial (LYS1).